A 43-amino-acid chain; its full sequence is Protein PsbN (43 aa).

Residues 4 to 24 traverse the membrane as a helical segment; sequence GILVVIFISCLLVSFTGYTIY.

It belongs to the PsbN family.

Its subcellular location is the plastid. The protein resides in the chloroplast thylakoid membrane. In terms of biological role, may play a role in photosystem I and II biogenesis. The sequence is that of Protein PsbN from Chaetosphaeridium globosum (Charophycean green alga).